Here is a 593-residue protein sequence, read N- to C-terminus: Metal-response element-binding transcription factor 2 (593 aa).

The tract at residues 1 to 24 (MRDSTGAGNSLVHKRSPLRRNQKT) is disordered. The segment covering 12-22 (VHKRSPLRRNQ) has biased composition (basic residues). T24 bears the Phosphothreonine mark. The 58-residue stretch at 44-101 (CKFEEGQDVLARWSDGLFYLGTIKKINILKQSCFIIFEDSSKSWVLWKDIQTGATGSG) folds into the Tudor domain. PHD-type zinc fingers lie at residues 102-157 (EMVC…CVFA) and 201-255 (QCYC…CSSG). Disordered stretches follow at residues 357-410 (VAFK…GPYT) and 444-486 (GIAH…TRTG). K360 participates in a covalent cross-link: Glycyl lysine isopeptide (Lys-Gly) (interchain with G-Cter in SUMO2). Residues 360-374 (KAEKEPEGTSHEFKI) are compositionally biased toward basic and acidic residues. Polar residues predominate over residues 447–470 (HSSNTSDVDLTGASSANETTSASI). Phosphoserine is present on S452. K522 is covalently cross-linked (Glycyl lysine isopeptide (Lys-Gly) (interchain with G-Cter in SUMO2)).

It belongs to the Polycomblike family. Associates with the PRC2 complex, which consists of the core components EED, EZH1 or EZH2, SUZ12, and RBBP4, and various combinations of accessory subunits including AEBP2, JARID2, PHF19, MTF2 and EPOP. Forms a dimeric PRC2.1 (class 1, PRC-PCL) complex consisting of at least SUZ12, RBBP4, and PHF19 or MTF2; PHF19 and MTF2 stabilize the dimeric structure which enhances PRC2 interaction with chromatin.

Its subcellular location is the nucleus. Its function is as follows. Polycomb group (PcG) protein that specifically binds histone H3 trimethylated at 'Lys-36' (H3K36me3) and recruits the PRC2 complex, thus enhancing PRC2 H3K27me3 methylation activity. Regulates the transcriptional networks during embryonic stem cell self-renewal and differentiation. Promotes recruitment of the PRC2 complex to the inactive X chromosome in differentiating XX ES cells and PRC2 recruitment to target genes in undifferentiated ES cells. Required to repress Hox genes by enhancing H3K27me3 methylation of the PRC2 complex. In some conditions may act as an inhibitor of PRC2 activity: able to activate the CDKN2A gene and promote cellular senescence by suppressing the catalytic activity of the PRC2 complex locally. Binds to the metal-regulating-element (MRE) of MT1A gene promoter. This is Metal-response element-binding transcription factor 2 (Mtf2) from Mus musculus (Mouse).